A 615-amino-acid chain; its full sequence is ATP-dependent RNA helicase mrh4, mitochondrial (615 aa).

The N-terminal 37 residues, 1–37 (MLRPKAGKCLLCSFRAAQKPVSQKWPSRALSMRTRLP), are a transit peptide targeting the mitochondrion. The interval 21 to 108 (VSQKWPSRAL…HRDRDDKKDR (88 aa)) is disordered. A compositionally biased stretch (basic and acidic residues) spans 90 to 108 (QERRTSRLDHRDRDDKKDR). The Q motif motif lies at 138–171 (QSFEQFALLDSVKQAIFQQALPELKEHVPTPVQR). Residues 184–395 (RRPKSEMEQY…RKRFPDINRL (212 aa)) form the Helicase ATP-binding domain. 197–204 (AETGSGKT) lines the ATP pocket. A DEAD box motif is present at residues 342–345 (DEAD). The region spanning 444–615 (PVKGLMDVKR…EGMFEGKALI (172 aa)) is the Helicase C-terminal domain.

Belongs to the DEAD box helicase family. MRH4 subfamily.

The protein localises to the mitochondrion. The catalysed reaction is ATP + H2O = ADP + phosphate + H(+). In terms of biological role, ATP-binding RNA helicase involved in mitochondrial RNA metabolism. Required for maintenance of mitochondrial DNA. The chain is ATP-dependent RNA helicase mrh4, mitochondrial (mrh4) from Sclerotinia sclerotiorum (strain ATCC 18683 / 1980 / Ss-1) (White mold).